The following is a 127-amino-acid chain: Histone H2B type 1-A (127 aa).

Residues 1–32 are disordered; it reads MPEVSAKGTTISKKGFKKAVTKTQKKEGRKRK. The residue at position 2 (Pro2) is an N-acetylproline. 7 positions are modified to N6-acetyllysine; alternate: Lys7, Lys13, Lys14, Lys17, Lys18, Lys22, and Lys25. 8 positions are modified to N6-crotonyllysine; alternate: Lys7, Lys13, Lys14, Lys17, Lys18, Lys22, Lys25, and Lys36. An N6-lactoyllysine; alternate mark is found at Lys7 and Lys13. Residue Lys7 forms a Glycyl lysine isopeptide (Lys-Gly) (interchain with G-Cter in SUMO2); alternate linkage. N6-lactoyllysine; alternate occurs at positions 17, 18, 22, and 25. Lys22 participates in a covalent cross-link: Glycyl lysine isopeptide (Lys-Gly) (interchain with G-Cter in SUMO2); alternate. Residue Lys36 is modified to N6-succinyllysine; alternate. A Glycyl lysine isopeptide (Lys-Gly) (interchain with G-Cter in ubiquitin); alternate cross-link involves residue Lys36. Ser38 is modified (phosphoserine). Lys45 is subject to N6-lactoyllysine; alternate. Position 48 is an N6-methyllysine (Lys48). An N6,N6-dimethyllysine modification is found at Lys59. At Arg81 the chain carries Dimethylated arginine. At Lys87 the chain carries N6-acetyllysine; alternate. Lys87 carries the post-translational modification N6-lactoyllysine; alternate. At Lys87 the chain carries N6,N6,N6-trimethyllysine; alternate. Omega-N-methylarginine occurs at positions 88 and 94. N6-lactoyllysine; alternate is present on Lys110. N6-methyllysine is present on Lys110. Position 117 is a phosphothreonine (Thr117). N6-lactoyllysine; alternate is present on residues Lys118 and Lys122. 2 positions are modified to N6-succinyllysine; alternate: Lys118 and Lys122. Position 118 is an N6-methylated lysine; alternate (Lys118). Lys122 is covalently cross-linked (Glycyl lysine isopeptide (Lys-Gly) (interchain with G-Cter in ubiquitin); alternate).

It belongs to the histone H2B family. As to quaternary structure, the nucleosome is a histone octamer containing two molecules each of H2A, H2B, H3 and H4 assembled in one H3-H4 heterotetramer and two H2A-H2B heterodimers. Monoubiquitination at Lys-36 by the MSL1/MSL2 dimer is required for histone H3 'Lys-4' (H3K4me) and 'Lys-79' (H3K79me) methylation and transcription activation at specific gene loci, such as HOXA9 and MEIS1 loci. Similarly, monoubiquitination of Lys-122 (H2BK120Ub) by the RNF20/40 complex gives a specific tag for epigenetic transcriptional activation and is also prerequisite for histone H3 'Lys-4' and 'Lys-79' methylation. It also functions cooperatively with the FACT dimer to stimulate elongation by RNA polymerase II. H2BK120Ub also acts as a regulator of mRNA splicing: deubiquitination by USP49 is required for efficient cotranscriptional splicing of a large set of exons. In terms of processing, crotonylation (Kcr) is specifically present in male germ cells and marks testis-specific genes in post-meiotic cells, including X-linked genes that escape sex chromosome inactivation in haploid cells. Crotonylation marks active promoters and enhancers and confers resistance to transcriptional repressors. It is also associated with post-meiotically activated genes on autosomes. Post-translationally, acetylated during spermatogenesis. Acetylated form is most abundant in spermatogonia compared to spermatocytes and round spermatids. Phosphorylated at Thr-117 in spermatogonia, spermatocytes and round spermatids. In terms of processing, methylated at Lys-118 in spermatogonia, spermatocytes and round spermatids. Post-translationally, lactylated in macrophages by EP300/P300 by using lactoyl-CoA directly derived from endogenous or exogenous lactate, leading to stimulates gene transcription. As to expression, testis. Expressed in pachytene spermatocytes during meiotic prophase I in the absence of any significant DNA synthesis.

It is found in the nucleus. It localises to the chromosome. Its function is as follows. Variant histone specifically required to direct the transformation of dissociating nucleosomes to protamine in male germ cells. Entirely replaces classical histone H2B prior nucleosome to protamine transition and probably acts as a nucleosome dissociating factor that creates a more dynamic chromatin, facilitating the large-scale exchange of histones. Core component of nucleosome. Nucleosomes wrap and compact DNA into chromatin, limiting DNA accessibility to the cellular machineries which require DNA as a template. Histones thereby play a central role in transcription regulation, DNA repair, DNA replication and chromosomal stability. DNA accessibility is regulated via a complex set of post-translational modifications of histones, also called histone code, and nucleosome remodeling. The sequence is that of Histone H2B type 1-A from Rattus norvegicus (Rat).